Here is a 261-residue protein sequence, read N- to C-terminus: tRNA U34 carboxymethyltransferase (261 aa).

Residues Lys25, Trp39, Lys44, Gly63, 114–115 (VE), Tyr135, and Arg250 each bind carboxy-S-adenosyl-L-methionine.

This sequence belongs to the class I-like SAM-binding methyltransferase superfamily. CmoB family. As to quaternary structure, homotetramer.

The enzyme catalyses carboxy-S-adenosyl-L-methionine + 5-hydroxyuridine(34) in tRNA = 5-carboxymethoxyuridine(34) in tRNA + S-adenosyl-L-homocysteine + H(+). In terms of biological role, catalyzes carboxymethyl transfer from carboxy-S-adenosyl-L-methionine (Cx-SAM) to 5-hydroxyuridine (ho5U) to form 5-carboxymethoxyuridine (cmo5U) at position 34 in tRNAs. In Helicobacter pylori (strain ATCC 700392 / 26695) (Campylobacter pylori), this protein is tRNA U34 carboxymethyltransferase.